A 134-amino-acid chain; its full sequence is Small ribosomal subunit protein uS8c (134 aa).

This sequence belongs to the universal ribosomal protein uS8 family. Part of the 30S ribosomal subunit.

The protein resides in the plastid. It is found in the chloroplast. In terms of biological role, one of the primary rRNA binding proteins, it binds directly to 16S rRNA central domain where it helps coordinate assembly of the platform of the 30S subunit. This Nicotiana tabacum (Common tobacco) protein is Small ribosomal subunit protein uS8c (rps8).